The primary structure comprises 483 residues: Iron-sulfur cluster assembly SufBD family protein ycf24 (483 aa).

The protein belongs to the iron-sulfur cluster assembly SufBD family.

The protein localises to the plastid. Its subcellular location is the chloroplast. This is Iron-sulfur cluster assembly SufBD family protein ycf24 (ycf24) from Guillardia theta (Cryptophyte).